A 260-amino-acid polypeptide reads, in one-letter code: Type III pantothenate kinase (260 aa).

6-13 contributes to the ATP binding site; the sequence is DAGNTRIK. Substrate contacts are provided by residues Tyr-100 and 107–110; that span reads GADR. Asp-109 serves as the catalytic Proton acceptor. Thr-133 is a binding site for ATP. Thr-186 contacts substrate.

The protein belongs to the type III pantothenate kinase family. Homodimer. NH4(+) is required as a cofactor. It depends on K(+) as a cofactor.

The protein localises to the cytoplasm. It carries out the reaction (R)-pantothenate + ATP = (R)-4'-phosphopantothenate + ADP + H(+). It participates in cofactor biosynthesis; coenzyme A biosynthesis; CoA from (R)-pantothenate: step 1/5. Its function is as follows. Catalyzes the phosphorylation of pantothenate (Pan), the first step in CoA biosynthesis. The polypeptide is Type III pantothenate kinase (Janthinobacterium sp. (strain Marseille) (Minibacterium massiliensis)).